The following is a 184-amino-acid chain: Elongation factor P (184 aa).

It belongs to the elongation factor P family.

It localises to the cytoplasm. The protein operates within protein biosynthesis; polypeptide chain elongation. Functionally, involved in peptide bond synthesis. Stimulates efficient translation and peptide-bond synthesis on native or reconstituted 70S ribosomes in vitro. Probably functions indirectly by altering the affinity of the ribosome for aminoacyl-tRNA, thus increasing their reactivity as acceptors for peptidyl transferase. In Paracidovorax citrulli (strain AAC00-1) (Acidovorax citrulli), this protein is Elongation factor P.